A 2477-amino-acid polypeptide reads, in one-letter code: Non-reducing polyketide synthase mapC (2477 aa).

The N-terminal acylcarrier protein transacylase domain (SAT) stretch occupies residues 14–269 (LLFGPQCSEI…HQQTHREGIQ (256 aa)). One can recognise a Ketosynthase family 3 (KS3) domain in the interval 403–820 (MPPIAITGMA…GSNAALIVRD (418 aa)). Catalysis depends on for beta-ketoacyl synthase activity residues Cys-568, His-703, and His-742. The malonyl-CoA:ACP transacylase (MAT) domain stretch occupies residues 930-1233 (LCFGGQNGVT…HRVNLDGSDG (304 aa)). Catalysis depends on Ser-1017, which acts as the For acyl/malonyl transferase activity. An N-terminal hotdog fold region spans residues 1302–1435 (QERAGLLRKL…GSVSLCNERS (134 aa)). One can recognise a PKS/mFAS DH domain in the interval 1302–1612 (QERAGLLRKL…FMSVSIRSLT (311 aa)). The product template (PT) domain stretch occupies residues 1307 to 1611 (LLRKLSDGPE…RFMSVSIRSL (305 aa)). The active-site Proton acceptor; for dehydratase activity is His-1336. Residues 1461-1612 (ASNGLKGSTV…FMSVSIRSLT (152 aa)) form a C-terminal hotdog fold region. Asp-1518 serves as the catalytic Proton donor; for dehydratase activity. The Carrier domain maps to 1651-1725 (DSDLVAVQEM…GLTEHIFPGH (75 aa)). Ser-1685 bears the O-(pantetheine 4'-phosphoryl)serine mark. Residues 1882 to 2117 (PYALEHDLLQ…GFEWVGWTNN (236 aa)) are methyltransferase (CMeT) domain. Catalysis depends on for thioesterase activity residues Ser-2267 and Asp-2421.

Its subcellular location is the cytoplasm. The protein resides in the cytosol. It carries out the reaction 3 malonyl-CoA + acetyl-CoA + S-adenosyl-L-methionine + H(+) = 5-methylorsellinate + S-adenosyl-L-homocysteine + 3 CO2 + 4 CoA. Its pathway is secondary metabolite biosynthesis; terpenoid biosynthesis. Functionally, non-reducing polyketide synthase; part of the gene cluster that mediates the biosynthesis of mycophenolic acid (MPA), the first isolated antibiotic natural product in the world obtained from a culture of Penicillium brevicompactum in 1893. MpaC catalyzes the synthesis of 5-methylorsellinic acid (5MOA) via the condensation of 1 acetyl-CoA starter unit with 3 malonyl-CoA units and one methylation step. The first step of the pathway is the synthesis of 5-methylorsellinic acid (5MOA) by the cytosolic polyketide synthase mpaC. 5MOA is then converted to the phthalide compound 5,7-dihydroxy-4,6-dimethylphthalide (DHMP) by the endoplasmic reticulum-bound cytochrome P450 monooxygenase mpaDE. MpaDE first catalyzes hydroxylation of 5-MOA to 4,6-dihydroxy-2-(hydroxymethyl)-3-methylbenzoic acid (DHMB). MpaDE then acts as a lactone synthase that catalyzes the ring closure to convert DHMB into DHMP. The next step is the prenylation of DHMP by the Golgi apparatus-associated prenyltransferase mpaA to yield farnesyl-DHMP (FDHMP). The ER-bound oxygenase mpaB then mediates the oxidative cleavage the C19-C20 double bond in FDHMP to yield FDHMP-3C via a mycophenolic aldehyde intermediate. The O-methyltransferase mpaG catalyzes the methylation of FDHMP-3C to yield MFDHMP-3C. After the cytosolic methylation of FDHMP-3C, MFDHMP-3C enters into peroxisomes probably via free diffusion due to its low molecular weight. Upon a peroxisomal CoA ligation reaction, catalyzed by a beta-oxidation component enzyme acyl-CoA ligase ACL891, MFDHMP-3C-CoA would then be restricted to peroxisomes for the following beta-oxidation pathway steps. The peroxisomal beta-oxidation machinery than converts MFDHMP-3C-CoA into MPA_CoA, via a beta-oxidation chain-shortening process. Finally mpaH acts as a peroxisomal acyl-CoA hydrolase with high substrate specificity toward MPA-CoA to release the final product MPA. In Penicillium roqueforti (strain FM164), this protein is Non-reducing polyketide synthase mapC.